Reading from the N-terminus, the 98-residue chain is NADH-ubiquinone oxidoreductase chain 4L (98 aa).

3 helical membrane passes run 1-21, 29-49, and 61-81; these read MSMV…GLLM, SLLC…ITIM, and IILL…LVMI.

It belongs to the complex I subunit 4L family. In terms of assembly, core subunit of respiratory chain NADH dehydrogenase (Complex I) which is composed of 45 different subunits.

The protein resides in the mitochondrion inner membrane. It catalyses the reaction a ubiquinone + NADH + 5 H(+)(in) = a ubiquinol + NAD(+) + 4 H(+)(out). Its function is as follows. Core subunit of the mitochondrial membrane respiratory chain NADH dehydrogenase (Complex I) which catalyzes electron transfer from NADH through the respiratory chain, using ubiquinone as an electron acceptor. Part of the enzyme membrane arm which is embedded in the lipid bilayer and involved in proton translocation. This chain is NADH-ubiquinone oxidoreductase chain 4L (MT-ND4L), found in Procyon lotor (Raccoon).